Consider the following 1277-residue polypeptide: Membrane-associated guanylate kinase, WW and PDZ domain-containing protein 2 (1277 aa).

The region spanning 17–101 (ESVIGRNPEG…PLRLKCVKQG (85 aa)) is the PDZ domain. Positions 109–283 (RHYLNLRFQK…APVYSQPEEL (175 aa)) constitute a Guanylate kinase-like domain. The segment at 205–308 (PGATPSAEGK…EDSDPLPDNW (104 aa)) is disordered. The segment covering 281–296 (EELKDQMDDTKSTKPE) has biased composition (basic and acidic residues). 2 WW domains span residues 302-335 (DPLP…DPRL) and 348-381 (NELP…NPVL). The interaction with DDN stretch occupies residues 302–381 (DPLPDNWEMA…RRTQFENPVL (80 aa)). At Tyr362 the chain carries Phosphotyrosine. The PDZ 1 domain maps to 426-510 (STTLKKSNMG…SVNLVLCRGY (85 aa)). A disordered region spans residues 556 to 575 (QSVPDITDRPPHSLHSMPAD). The PDZ 2 domain occupies 605–683 (TLTIVKGAKG…ETSLIIHRGG (79 aa)). A Phosphoserine modification is found at Ser686. Positions 778-860 (DVHLRRMESG…NGQVNLTVRR (83 aa)) constitute a PDZ 3 domain. Phosphotyrosine is present on Tyr827. The segment at 869–913 (CPENGRSPGSVSTHHSSPRSDYATYANSNHAAPSNNASPPEGFAS) is disordered. Residues Ser884 and Ser885 each carry the phosphoserine modification. Positions 894-908 (ANSNHAAPSNNASPP) are enriched in low complexity. The PDZ 4 domain maps to 920 to 1010 (DVIIHRKENE…SVTLRIIPQE (91 aa)). Polar residues predominate over residues 1011-1042 (ELNNPTSAPSSEKQSPMAQQHSPLAQQHSPLA). A disordered region spans residues 1011-1130 (ELNNPTSAPS…PDTRQYPLSD (120 aa)). The segment covering 1069-1085 (NSYRSEVKARQDVKPDI) has biased composition (basic and acidic residues). One can recognise a PDZ 5 domain in the interval 1141-1223 (TVDMEKGAKG…RVRLLLKRGT (83 aa)).

This sequence belongs to the MAGUK family. As to quaternary structure, interacts (via its WW domains) with DRPLA. Interacts with CTNNB1, ACVR2A, SMAD2 and SMAD3. Part of a complex consisting of MAGI2/ARIP1, ACVR2A, ACVR1B and SMAD3. May interact with HTR2A and IGSF9. Interacts with HTR4. Interacts (via guanylate kinase domain) with DLGAP1. Interacts (via PDZ domains) with GRIN2A, GRID2 and NLGN1. Interacts with CTNND2. Interacts with MAGUIN-1. Interacts (via its second PDZ domain) with PTEN (via unphosphorylated C-terminus); this interaction diminishes the degradation rate of PTEN. Found in a complex, at least composed of KIDINS220, MAGI2, NTRK1 and RAPGEF2; the complex is mainly formed at late endosomes in a NGF-dependent manner. Interacts with RAPGEF2; the interaction occurs before or after nerve growth factor (NGF) stimulation. Isoform 1 interacts (via PDZ domain) with KIDINS220 isoform 2 (via C-terminal domain). Interacts with DDN. Identified in a complex with ACTN4, CASK, IQGAP1, NPHS1, SPTAN1 and SPTBN1. Interacts with DLL1. Found in a complex with IGSF9B and NLGN2; the interaction with IGSF9B is mediated via the PDZ 5 and PDZ 6 domains, while the interaction with NLGN2 is mediated via the WW1, WW2 and PDZ2 domains. Interacts (via PDZ 6 domain) with USH1G (via SAM domain); the interaction is triggered by phosphorylation of USH1G by CK2 and negatively regulates MAGI2-mediated endocytosis. In terms of tissue distribution, expressed in the foot process layer of podocytes of the kidney glomeruli but not in tubules (at protein level). Expressed in the brain.

It localises to the cytoplasm. The protein localises to the late endosome. It is found in the synapse. The protein resides in the synaptosome. Its subcellular location is the cell membrane. It localises to the cytoskeleton. The protein localises to the microtubule organizing center. It is found in the centrosome. The protein resides in the cell projection. Its subcellular location is the cilium. It localises to the centriole. The protein localises to the photoreceptor inner segment. It is found in the photoreceptor outer segment. Functionally, seems to act as scaffold molecule at synaptic junctions by assembling neurotransmitter receptors and cell adhesion proteins. Plays a role in nerve growth factor (NGF)-induced recruitment of RAPGEF2 to late endosomes and neurite outgrowth. May play a role in regulating activin-mediated signaling in neuronal cells. Enhances the ability of PTEN to suppress AKT1 activation. Plays a role in receptor-mediated clathrin-dependent endocytosis which is required for ciliogenesis. This chain is Membrane-associated guanylate kinase, WW and PDZ domain-containing protein 2 (Magi2), found in Rattus norvegicus (Rat).